The primary structure comprises 183 residues: 16 kDa gamma-zein (183 aa).

A signal peptide spans 1 to 19 (MKVLIVALALLALAASAAS).

As to quaternary structure, interacts with OP10 (via N-terminus).

The protein resides in the vacuole. It is found in the aleurone grain. Its function is as follows. Zeins are major seed storage proteins. This Zea mays (Maize) protein is 16 kDa gamma-zein.